The chain runs to 513 residues: MEQLSEEMIVVLDFGGQYNQLITRRIRDLGVYSELHPNTITAEQLKEMKPKGIIFSGGPNSAYAEGAPKCDPAIFDLGVPILGICYGMQLMTQHFGGKVDAAEHREYGKATITVENQSKLFQGLPVEQTVWMSHGDLIVAPPEGFVVDAQNPSCPVAAMSDEARNYYGVQFQPEVRHSQFGDDMLKNFAFAVCGCEGNWSMENFIELEMEKIREQVGDKQVLCALSGGVDSSVVAVLIHKAIGDQLTCMFIDHGLLRKGEADSVMKTFSEGFNMNVIKIDAKDRFLSKLEGVSDPEQKRKIIGNEFIYVFEEEASKLKDMDFLAQGTLYTDIIESGTATAQTIKSHHNVGGLPEDMRFELIEPLNTLFKDEVRKLGTELGIPDEVVWRQPFPGPGLGIRVLGEITEEKLEIVRESDAILREEIKKAGLDREIWQYFTALPNMRSVGVMGDARTYDYTVGIRAVTSIDGMTSDWARIPWDVLEIISTRIVNEVKHVNRVVYDITSKPPATIEWE.

One can recognise a Glutamine amidotransferase type-1 domain in the interval methionine 8–asparagine 198. Residue cysteine 85 is the Nucleophile of the active site. Residue glutamate 174 is part of the active site. The region spanning tryptophan 199–arginine 388 is the GMPS ATP-PPase domain. Serine 226–serine 232 is an ATP binding site.

Homodimer.

The enzyme catalyses XMP + L-glutamine + ATP + H2O = GMP + L-glutamate + AMP + diphosphate + 2 H(+). The protein operates within purine metabolism; GMP biosynthesis; GMP from XMP (L-Gln route): step 1/1. Its function is as follows. Catalyzes the synthesis of GMP from XMP. The chain is Putative GMP synthase [glutamine-hydrolyzing] (guaA) from Halalkalibacterium halodurans (strain ATCC BAA-125 / DSM 18197 / FERM 7344 / JCM 9153 / C-125) (Bacillus halodurans).